The primary structure comprises 231 residues: Modulator of macroautophagy TMEM150B-B (231 aa).

Residue Met-1 is a topological domain, cytoplasmic. A helical membrane pass occupies residues 2–22 (WAWALLPICLTVWATGGIWIV). Topologically, residues 23–50 (YAMSVSNGSVNLSDGFPYISVSGTYPPQ) are extracellular. N-linked (GlcNAc...) asparagine glycans are attached at residues Asn-29 and Asn-33. The chain crosses the membrane as a helical span at residues 51–71 (SCVFGQVLNVGAMLAVWISVI). Residues 72–83 (RFQQIRDYNCHS) lie on the Cytoplasmic side of the membrane. Residues 84–104 (VLNSVSLATGILCALGTSIVG) form a helical membrane-spanning segment. The Extracellular portion of the chain corresponds to 105–115 (NFQQSNQLQTH). A helical transmembrane segment spans residues 116–136 (LAGAFLAFIIGNVYFWMQTAL). Over 137-150 (TYMVKPKHGGCYIG) the chain is Cytoplasmic. The helical transmembrane segment at 151–171 (PIRFCLSIACTALIVAMAVFL) threads the bilayer. Topologically, residues 172 to 183 (KMNMKSVSAICE) are extracellular. Residues 184–204 (WIVAMILFLLYGLFAVDFWHL) form a helical membrane-spanning segment. Residues 205–231 (DGHFFHVKKRRTVIPNEMEVSTVTLSI) lie on the Cytoplasmic side of the membrane.

The protein belongs to the DRAM/TMEM150 family.

It localises to the cell membrane. The protein resides in the endosome membrane. The protein localises to the cytoplasmic vesicle. Its subcellular location is the autophagosome membrane. Functionally, modulator of macroautophagy that causes accumulation of autophagosomes under basal conditions and enhances autophagic flux. Represses cell death and promotes long-term clonogenic survival of cells grown in the absence of glucose in a macroautophagy-independent manner. May have some role in extracellular matrix engulfment or growth factor receptor recycling, both of which can modulate cell survival. This is Modulator of macroautophagy TMEM150B-B from Xenopus laevis (African clawed frog).